Here is a 210-residue protein sequence, read N- to C-terminus: Cell division protein SepF (210 aa).

2 disordered regions span residues 22–72 (DYYE…FDDA) and 79–98 (RGPR…RGST). Basic and acidic residues-rich tracts occupy residues 37-60 (RPRE…REYD) and 79-88 (RGPREFDRTP).

This sequence belongs to the SepF family. Homodimer. Interacts with FtsZ.

The protein resides in the cytoplasm. Functionally, cell division protein that is part of the divisome complex and is recruited early to the Z-ring. Probably stimulates Z-ring formation, perhaps through the cross-linking of FtsZ protofilaments. Its function overlaps with FtsA. The protein is Cell division protein SepF of Mycolicibacterium vanbaalenii (strain DSM 7251 / JCM 13017 / BCRC 16820 / KCTC 9966 / NRRL B-24157 / PYR-1) (Mycobacterium vanbaalenii).